The chain runs to 660 residues: Bifunctional polymyxin resistance protein ArnA (660 aa).

The tract at residues 1–304 is formyltransferase ArnAFT; that stretch reads MKAVIFAYHD…TLGLVAGARL (304 aa). His104 (proton donor; for formyltransferase activity) is an active-site residue. (6R)-10-formyltetrahydrofolate contacts are provided by residues Arg114 and 136 to 140; that span reads VKRAD. Positions 314-660 are dehydrogenase ArnADH; that stretch reads RRIRVLILGV…RSVDVAERAS (347 aa). Residues Asp347 and 368–369 each bind NAD(+); that span reads DI. UDP-alpha-D-glucuronate is bound by residues Ala393, Tyr398, and 432–433; that span reads TS. Glu434 (proton acceptor; for decarboxylase activity) is an active-site residue. UDP-alpha-D-glucuronate is bound by residues Arg460, Asn492, 526 to 535, and Tyr613; that span reads KLIDGGQQKR. The Proton donor; for decarboxylase activity role is filled by Arg619.

In the N-terminal section; belongs to the Fmt family. UDP-L-Ara4N formyltransferase subfamily. The protein in the C-terminal section; belongs to the NAD(P)-dependent epimerase/dehydratase family. UDP-glucuronic acid decarboxylase subfamily. Homohexamer, formed by a dimer of trimers.

The catalysed reaction is UDP-alpha-D-glucuronate + NAD(+) = UDP-beta-L-threo-pentopyranos-4-ulose + CO2 + NADH. It catalyses the reaction UDP-4-amino-4-deoxy-beta-L-arabinose + (6R)-10-formyltetrahydrofolate = UDP-4-deoxy-4-formamido-beta-L-arabinose + (6S)-5,6,7,8-tetrahydrofolate + H(+). It functions in the pathway nucleotide-sugar biosynthesis; UDP-4-deoxy-4-formamido-beta-L-arabinose biosynthesis; UDP-4-deoxy-4-formamido-beta-L-arabinose from UDP-alpha-D-glucuronate: step 1/3. The protein operates within nucleotide-sugar biosynthesis; UDP-4-deoxy-4-formamido-beta-L-arabinose biosynthesis; UDP-4-deoxy-4-formamido-beta-L-arabinose from UDP-alpha-D-glucuronate: step 3/3. Its pathway is bacterial outer membrane biogenesis; lipopolysaccharide biosynthesis. Functionally, bifunctional enzyme that catalyzes the oxidative decarboxylation of UDP-glucuronic acid (UDP-GlcUA) to UDP-4-keto-arabinose (UDP-Ara4O) and the addition of a formyl group to UDP-4-amino-4-deoxy-L-arabinose (UDP-L-Ara4N) to form UDP-L-4-formamido-arabinose (UDP-L-Ara4FN). The modified arabinose is attached to lipid A and is required for resistance to polymyxin and cationic antimicrobial peptides. The sequence is that of Bifunctional polymyxin resistance protein ArnA from Salmonella choleraesuis (strain SC-B67).